The following is a 471-amino-acid chain: Glutamate--tRNA ligase (471 aa).

A 'HIGH' region motif is present at residues 9 to 19 (PSPTGYLHVGG). Zn(2+) is bound by residues Cys-98, Cys-100, Cys-125, and His-127. The short motif at 237–241 (KLSKR) is the 'KMSKS' region element. An ATP-binding site is contributed by Lys-240.

The protein belongs to the class-I aminoacyl-tRNA synthetase family. Glutamate--tRNA ligase type 1 subfamily. In terms of assembly, monomer. It depends on Zn(2+) as a cofactor.

The protein resides in the cytoplasm. The catalysed reaction is tRNA(Glu) + L-glutamate + ATP = L-glutamyl-tRNA(Glu) + AMP + diphosphate. In terms of biological role, catalyzes the attachment of glutamate to tRNA(Glu) in a two-step reaction: glutamate is first activated by ATP to form Glu-AMP and then transferred to the acceptor end of tRNA(Glu). The protein is Glutamate--tRNA ligase of Escherichia coli (strain ATCC 8739 / DSM 1576 / NBRC 3972 / NCIMB 8545 / WDCM 00012 / Crooks).